The sequence spans 337 residues: 25S rRNA (adenine(2142)-N(1))-methyltransferase (337 aa).

Gly-180 and Asp-201 together coordinate S-adenosyl-L-methionine.

This sequence belongs to the BMT2 family.

It is found in the nucleus. It localises to the nucleolus. It catalyses the reaction adenosine(2142) in 25S rRNA + S-adenosyl-L-methionine = N(1)-methyladenosine(2142) in 25S rRNA + S-adenosyl-L-homocysteine + H(+). Its function is as follows. S-adenosyl-L-methionine-dependent methyltransferase that specifically methylates the N(1) position of adenine 2142 in 25S rRNA. N(1)-methyladenine(2142) in 25S rRNA is present in helix 65, a region that accounts for most of the intersubunit surface of the large subunit. In Saccharomyces cerevisiae (strain ATCC 204508 / S288c) (Baker's yeast), this protein is 25S rRNA (adenine(2142)-N(1))-methyltransferase.